We begin with the raw amino-acid sequence, 284 residues long: MANALLVAAYKPPFLSSNACLSRLKKHFGMSKAGYLGTLDPFAKGVLVVGFGSYTRLFPHLQKVPKAYRATLWLGAKSASLDIEHIESIEIIPEYNQSDIEKILFSLKGTFDYTPPAFSAKHINGQRAYKLAREGKVFTLQQIQMSIYNITLLSYHHPFVHFEVSVSEGAYVRSIGEIIAKKLGVNGVLSSLERISEGQMSVSATEQIRILNPLEYLPYPQLENMHRFSKQMYDGKKITLKNAQKGKYIVCFEDFFSIIEIFSNGGIQYILNRIEYVDTFKKTR.

Residue aspartate 40 is the Nucleophile of the active site.

It belongs to the pseudouridine synthase TruB family. Type 1 subfamily.

The enzyme catalyses uridine(55) in tRNA = pseudouridine(55) in tRNA. Its function is as follows. Responsible for synthesis of pseudouridine from uracil-55 in the psi GC loop of transfer RNAs. The polypeptide is tRNA pseudouridine synthase B (Helicobacter hepaticus (strain ATCC 51449 / 3B1)).